The chain runs to 505 residues: Maturase K (505 aa).

Belongs to the intron maturase 2 family. MatK subfamily.

The protein resides in the plastid. It localises to the chloroplast. Usually encoded in the trnK tRNA gene intron. Probably assists in splicing its own and other chloroplast group II introns. In Physcomitrium patens (Spreading-leaved earth moss), this protein is Maturase K.